Consider the following 301-residue polypeptide: Protein FdhE homolog (301 aa).

This sequence belongs to the FdhE family.

It is found in the cytoplasm. In terms of biological role, necessary for formate dehydrogenase activity. The polypeptide is Protein FdhE homolog (Shewanella baltica (strain OS223)).